We begin with the raw amino-acid sequence, 631 residues long: MDSNPLHHSNPPVGSLPLDKVASLPSSPGVYQFKNAQGRVIYIGKAKNLRNRVRSYFRNPQQLFGKTLVMVGKIADIEVIITSSEVEALILENNLIKELKPRYNVNLKDDKTYPYLVITNEPFPRILVTRQVKKDGSTWFGPYTEARQLRSILDFIGSIFPIRSCKLRLSPENISRGKFKVCLDYHIHKCKGPCEGLLTEEEYLLMIVEITRLLKGKTSATIRSLNERMLSFAKELKFEQAAELKTQIDSLKRYAERQKVVTSDTLDRDVFAVASRNDDGCGVVFKIREGKLLGSERLYMNNTEGVSVQDLLARVVERYYLETCNLLPDEIFLQTELPAEEKETLENLLISKISAEGKQKRTIRLTVPIIGEKAHLIQLCRENARHHLEEYLIQKQKRGEALREHSGLIALAELLHLPKTPNRIECFDNSHFHGTDYVSSMVAFVHGKAKKSDYRKFKLKTVQGSDDYAAMHEVLTRRYSGTLSVELPLPDLIVVDGGKGQLSTAVKVLVSLKLDIPVIGLAKRIEEIFTPHTSDPFNLPKTSPALKLIQQLRDEAHRFAVTYHRKLRTERTLETELTTIQGIGEKTAQKLLRHFGSVDLIRTAGVDELRAAAGNKTAALLYRFYHPLEEG.

A GIY-YIG domain is found at 26-105 (SSPGVYQFKN…IKELKPRYNV (80 aa)). The UVR domain occupies 219 to 254 (SATIRSLNERMLSFAKELKFEQAAELKTQIDSLKRY).

This sequence belongs to the UvrC family. In terms of assembly, interacts with UvrB in an incision complex.

The protein resides in the cytoplasm. The UvrABC repair system catalyzes the recognition and processing of DNA lesions. UvrC both incises the 5' and 3' sides of the lesion. The N-terminal half is responsible for the 3' incision and the C-terminal half is responsible for the 5' incision. The chain is UvrABC system protein C from Chlorobium phaeobacteroides (strain DSM 266 / SMG 266 / 2430).